The following is a 309-amino-acid chain: Olfactory receptor 4B1 (309 aa).

Residues 1–23 (MASTSNVTELIFTGLFQDPAVQS) are Extracellular-facing. Residue Asn-6 is glycosylated (N-linked (GlcNAc...) asparagine). The helical transmembrane segment at 24 to 47 (VCFVVFLPVYLATVVGNGLIVLTV) threads the bilayer. The Cytoplasmic portion of the chain corresponds to 48–55 (SISKSLDS). Residues 56 to 77 (PMYFFLSCLSLVEISYSSTIAP) traverse the membrane as a helical segment. The Extracellular segment spans residues 78–98 (KFIIDLLAKIKTISLEGCLTQ). Cys-95 and Cys-187 are joined by a disulfide. Residues 99–118 (IFFFHFFGVAEILLIVVMAY) traverse the membrane as a helical segment. The Cytoplasmic portion of the chain corresponds to 119-137 (DCYVAICKPLHYMNIISRQ). The helical transmembrane segment at 138-156 (LCHLLVAGSWLGGFCHSII) threads the bilayer. Residues 157-193 (QILVIIQLPFCGPNVIDHYFCDLQPLFKLACTDTFME) lie on the Extracellular side of the membrane. A helical transmembrane segment spans residues 194–217 (GVIVLANSGLFSVFSFLILVSSYI). Residues 218–233 (VILVNLRNHSAEGRHK) are Cytoplasmic-facing. A helical membrane pass occupies residues 234–256 (ALSTCASHITVVILFFGPAIFLY). Over 257-267 (MRPSSTFTEDK) the chain is Extracellular. A helical membrane pass occupies residues 268–287 (LVAVFYTVITPMLNPIIYTL). Residues 288 to 309 (RNAEVKIAIRRLWSKKENPGRE) are Cytoplasmic-facing.

The protein belongs to the G-protein coupled receptor 1 family.

Its subcellular location is the cell membrane. Functionally, odorant receptor. This chain is Olfactory receptor 4B1 (OR4B1), found in Homo sapiens (Human).